A 246-amino-acid polypeptide reads, in one-letter code: Purine nucleoside phosphorylase ORF3 (246 aa).

Zn(2+)-binding residues include His-71, Cys-110, and His-127.

This sequence belongs to the purine nucleoside phosphorylase YfiH/LACC1 family. As to quaternary structure, homodimer. Requires Cu(2+) as cofactor. Zn(2+) is required as a cofactor.

The enzyme catalyses adenosine + phosphate = alpha-D-ribose 1-phosphate + adenine. It catalyses the reaction S-methyl-5'-thioadenosine + phosphate = 5-(methylsulfanyl)-alpha-D-ribose 1-phosphate + adenine. It carries out the reaction inosine + phosphate = alpha-D-ribose 1-phosphate + hypoxanthine. The catalysed reaction is adenosine + H2O + H(+) = inosine + NH4(+). Its function is as follows. Purine nucleoside enzyme that catalyzes the phosphorolysis of adenosine and inosine nucleosides, yielding D-ribose 1-phosphate and the respective free bases, adenine and hypoxanthine. Also catalyzes the phosphorolysis of S-methyl-5'-thioadenosine into adenine and S-methyl-5-thio-alpha-D-ribose 1-phosphate. Also has adenosine deaminase activity. The polypeptide is Purine nucleoside phosphorylase ORF3 (Streptomyces griseus).